Consider the following 595-residue polypeptide: SVP1-like protein 2 (595 aa).

Residues 1 to 28 (MVLAHSINTNPNTNTNTNNTSTTSSTTT) are disordered. One copy of the WD 1 repeat lies at 30–68 (PNDSKILCINFNQDQGCFAISHEQGFLVYNTDPIELRVK). 2 stretches are compositionally biased toward low complexity: residues 76–112 (HTTS…GSNN) and 270–339 (LSPT…TTTT). Disordered regions lie at residues 76–132 (HTTS…GSGS) and 264–342 (FSKR…TSAK). 2 WD repeats span residues 389–429 (AHKS…LLYE) and 434–473 (IDRA…YPND). A disordered region spans residues 467 to 490 (ETQYPNDGGSGGTKDGGGGGRGSK). Positions 474 to 488 (GGSGGTKDGGGGGRG) are enriched in gly residues.

This sequence belongs to the WD repeat PROPPIN family.

It localises to the vacuole membrane. The protein localises to the cytoplasmic vesicle membrane. Functionally, involved in mitochondrial or peroxisomal functions and amino acid signaling pathways. This chain is SVP1-like protein 2 (HSV2), found in Candida albicans (strain SC5314 / ATCC MYA-2876) (Yeast).